A 159-amino-acid chain; its full sequence is SsrA-binding protein (159 aa).

Residues 134 to 159 are disordered; the sequence is KLHDKRETSKERDWNRQKNRLLKERG. The span at 137 to 159 shows a compositional bias: basic and acidic residues; that stretch reads DKRETSKERDWNRQKNRLLKERG.

This sequence belongs to the SmpB family.

The protein localises to the cytoplasm. Its function is as follows. Required for rescue of stalled ribosomes mediated by trans-translation. Binds to transfer-messenger RNA (tmRNA), required for stable association of tmRNA with ribosomes. tmRNA and SmpB together mimic tRNA shape, replacing the anticodon stem-loop with SmpB. tmRNA is encoded by the ssrA gene; the 2 termini fold to resemble tRNA(Ala) and it encodes a 'tag peptide', a short internal open reading frame. During trans-translation Ala-aminoacylated tmRNA acts like a tRNA, entering the A-site of stalled ribosomes, displacing the stalled mRNA. The ribosome then switches to translate the ORF on the tmRNA; the nascent peptide is terminated with the 'tag peptide' encoded by the tmRNA and targeted for degradation. The ribosome is freed to recommence translation, which seems to be the essential function of trans-translation. This chain is SsrA-binding protein, found in Rhizobium meliloti (strain 1021) (Ensifer meliloti).